Reading from the N-terminus, the 212-residue chain is Uridine kinase (212 aa).

ATP is bound at residue Gly13 to Thr20.

It belongs to the uridine kinase family.

It localises to the cytoplasm. The enzyme catalyses uridine + ATP = UMP + ADP + H(+). It catalyses the reaction cytidine + ATP = CMP + ADP + H(+). It functions in the pathway pyrimidine metabolism; CTP biosynthesis via salvage pathway; CTP from cytidine: step 1/3. Its pathway is pyrimidine metabolism; UMP biosynthesis via salvage pathway; UMP from uridine: step 1/1. This chain is Uridine kinase, found in Bacillus cereus (strain B4264).